A 329-amino-acid polypeptide reads, in one-letter code: Anthranilate phosphoribosyltransferase (329 aa).

Residues G78, 81–82, 88–91, 106–114, and S118 contribute to the 5-phospho-alpha-D-ribose 1-diphosphate site; these read GD, NLST, and KHGNRAASS. An anthranilate-binding site is contributed by G78. Residue S90 participates in Mg(2+) binding. Residue N109 participates in anthranilate binding. R164 contacts anthranilate. Residues D221 and E222 each coordinate Mg(2+).

It belongs to the anthranilate phosphoribosyltransferase family. Homodimer. Mg(2+) serves as cofactor.

It carries out the reaction N-(5-phospho-beta-D-ribosyl)anthranilate + diphosphate = 5-phospho-alpha-D-ribose 1-diphosphate + anthranilate. The protein operates within amino-acid biosynthesis; L-tryptophan biosynthesis; L-tryptophan from chorismate: step 2/5. In terms of biological role, catalyzes the transfer of the phosphoribosyl group of 5-phosphorylribose-1-pyrophosphate (PRPP) to anthranilate to yield N-(5'-phosphoribosyl)-anthranilate (PRA). This is Anthranilate phosphoribosyltransferase from Thermus thermophilus (strain ATCC BAA-163 / DSM 7039 / HB27).